Here is a 60-residue protein sequence, read N- to C-terminus: Bacteriochlorophyll c-binding protein (60 aa).

The residue at position 1 (M1) is an N-formylmethionine. H25 serves as a coordination point for a bacteriochlorophyll c.

It belongs to the BChl C/E-binding protein family.

Its subcellular location is the chlorosome. The protein localises to the chlorosome envelope. In terms of biological role, component of the photosynthetic apparatus. The light harvesting B740 complex binds bacteriochlorophyll c. This Pelodictyon luteolum protein is Bacteriochlorophyll c-binding protein (csmA).